We begin with the raw amino-acid sequence, 80 residues long: Transcription elongation factor 1 homolog (80 aa).

Positions 25, 28, 49, and 52 each coordinate Zn(2+).

The protein belongs to the ELOF1 family.

The protein localises to the nucleus. Its function is as follows. Transcription elongation factor implicated in the maintenance of proper chromatin structure in actively transcribed regions. The chain is Transcription elongation factor 1 homolog from Encephalitozoon cuniculi (strain GB-M1) (Microsporidian parasite).